The chain runs to 78 residues: MSVAEKVKEIIVDQLGVDAAEVNPDAKFVDDLGADSLDLTELIMAMEEEFGVEISDEDAQQIQKVQDAISFIEKKKGE.

In terms of domain architecture, Carrier spans 1–76; the sequence is MSVAEKVKEI…DAISFIEKKK (76 aa). S36 carries the post-translational modification O-(pantetheine 4'-phosphoryl)serine.

This sequence belongs to the acyl carrier protein (ACP) family. 4'-phosphopantetheine is transferred from CoA to a specific serine of apo-ACP by AcpS. This modification is essential for activity because fatty acids are bound in thioester linkage to the sulfhydryl of the prosthetic group.

It localises to the cytoplasm. It functions in the pathway lipid metabolism; fatty acid biosynthesis. Functionally, carrier of the growing fatty acid chain in fatty acid biosynthesis. The protein is Acyl carrier protein of Solidesulfovibrio magneticus (strain ATCC 700980 / DSM 13731 / RS-1) (Desulfovibrio magneticus).